The sequence spans 239 residues: Phosphoglycolate phosphatase (239 aa).

Residue Asp-9 is the Nucleophile of the active site. The Mg(2+) site is built by Asp-9 and Asp-11. Lys-157 provides a ligand contact to substrate. Asp-180 and Asp-184 together coordinate Mg(2+).

This sequence belongs to the archaeal SPP-like hydrolase family. It depends on Mg(2+) as a cofactor.

It catalyses the reaction 2-phosphoglycolate + H2O = glycolate + phosphate. Catalyzes the dephosphorylation of 2-phosphoglycolate. This Thermococcus kodakarensis (strain ATCC BAA-918 / JCM 12380 / KOD1) (Pyrococcus kodakaraensis (strain KOD1)) protein is Phosphoglycolate phosphatase.